We begin with the raw amino-acid sequence, 449 residues long: VIRF-1 (449 aa).

Positions 1–60 (MDPGQRPNPFGAPGAIPKKPCLSQGSPGTSGSGAPCDEPSRSESPGEGPSGTGGSAAAGD) are disordered. A DNA-binding region (IRF tryptophan pentad repeat) is located at residues 89-195 (KASIKDWIVC…HHFLVFRVRK (107 aa)). 2 positions are modified to N6-propionyllysine; by host: K406 and K442.

This sequence belongs to the IRF family. Forms homodimers. Interacts with host IRF3, IRF7, and CREBBP. Interacts with host SYNCRIP. Interacts with host USP7. Interacts (via C-terminus) with host HERC5. Interacts with host GABARAPL1. Interacts with host SIRT6. ISGylated. In terms of processing, propionylated in lysine residues Lys-406 and Lys-442, which is required for effective inhibition of IFN-beta production and antiviral signaling.

The protein localises to the host cytoplasm. Plays a role in the inhibition of host innate response by repressing the expression of interferon-inducible genes and blocking host IRF1- and IRF3-mediated transcription. Blocks the interaction between host IRF3 and CREBBP. Regulates the host cellular metabolism by increasing glucose uptake, ATP production and lactate secretion through down-regulation of heterogeneous nuclear ribonuclear protein Q1/SYNCRIP. Mechanistically, induces ubiquitination and degradation of SYNCRIP through the ubiquitin-proteasome pathway by recruiting KLHL3/CUL3 ubiquitin ligase complex. Disrupts host TP53 signaling pathway during viral infection by interacting with host USP7 and thereby decreasing the availability of USP7 for deubiquitinating and stabilizing TP53. Plays a role in the global inhibition of protein ISGylation by interacting with host HERC5 leading to its inhibition. Promotes its own propionylation by blocking SIRT6 interaction with ubiquitin-specific peptidase 10/USP10 leading to SIRT6 degradation via a ubiquitin-proteasome pathway. In turn, propionylation is required to block IRF3-CBP/p300 recruitment and to repress the STING DNA sensing pathway. Plays a role in the activation of mitophagy during infection via interaction with the host proteins NIX/BNIP3L, TUFM and GABARAPL1 thereby inhibiting antiviral responses and contributing to productive replication. In Homo sapiens (Human), this protein is VIRF-1 (vIRF-1).